A 194-amino-acid chain; its full sequence is Lysozyme g-like protein 1 (194 aa).

The first 19 residues, 1-19, serve as a signal peptide directing secretion; sequence MSALWLLLGLLALMDLSES. 2 disulfides stabilise this stretch: Cys24–Cys80 and Cys38–Cys49.

Belongs to the glycosyl hydrolase 23 family.

The protein resides in the secreted. The sequence is that of Lysozyme g-like protein 1 (LYG1) from Homo sapiens (Human).